The primary structure comprises 1342 residues: DNA-directed RNA polymerase subunit beta (1342 aa).

Belongs to the RNA polymerase beta chain family. In terms of assembly, the RNAP catalytic core consists of 2 alpha, 1 beta, 1 beta' and 1 omega subunit. When a sigma factor is associated with the core the holoenzyme is formed, which can initiate transcription.

The catalysed reaction is RNA(n) + a ribonucleoside 5'-triphosphate = RNA(n+1) + diphosphate. DNA-dependent RNA polymerase catalyzes the transcription of DNA into RNA using the four ribonucleoside triphosphates as substrates. This chain is DNA-directed RNA polymerase subunit beta, found in Aeromonas hydrophila subsp. hydrophila (strain ATCC 7966 / DSM 30187 / BCRC 13018 / CCUG 14551 / JCM 1027 / KCTC 2358 / NCIMB 9240 / NCTC 8049).